Consider the following 201-residue polypeptide: Dermatopontin (201 aa).

The N-terminal stretch at 1-18 (MDLTLLWVLLPLVTTAWG) is a signal peptide. Q19 is modified (pyrrolidone carboxylic acid). A 2 X 53-55 AA tandem repeats region spans residues 19–186 (QYGGYGYPYQ…AVERDRQWKF (168 aa)). Y23 carries the post-translational modification Sulfotyrosine. 4 repeat units span residues 26–79 (PYQQ…ACMP), 70–75 (DRQWNY), 80–135 (TPQS…CCRY), and 125–130 (DREWQF). Cystine bridges form between C50–C77, C90–C132, C106–C133, C139–C196, and C143–C189. The tract at residues 70–186 (DRQWNYACMP…AVERDRQWKF (117 aa)) is 3 X 6 AA tandem repeats of D-R-[EQ]-W-[NQK]-[FY]. Residues Y162, Y164, and Y167 each carry the sulfotyrosine modification. A 2-3 repeat occupies 181-186 (DRQWKF). The residue at position 194 (Y194) is a Sulfotyrosine.

Belongs to the dermatopontin family. In terms of assembly, interacts with TGFB1, DCN and collagen. In terms of processing, sulfated on tyrosine residue(s).

Its subcellular location is the secreted. It is found in the extracellular space. The protein localises to the extracellular matrix. In terms of biological role, seems to mediate adhesion by cell surface integrin binding. May serve as a communication link between the dermal fibroblast cell surface and its extracellular matrix environment. Enhances TGFB1 activity. Inhibits cell proliferation. Accelerates collagen fibril formation, and stabilizes collagen fibrils against low-temperature dissociation. This chain is Dermatopontin (Dpt), found in Mus musculus (Mouse).